Here is a 414-residue protein sequence, read N- to C-terminus: Methyltransferase-like protein 2 (414 aa).

A disordered region spans residues 56–77; that stretch reads LNQHSSESNPKKRKRKQKNSSF.

This sequence belongs to the MT-A70-like family.

Probable methyltransferase. This is Methyltransferase-like protein 2 from Arabidopsis thaliana (Mouse-ear cress).